We begin with the raw amino-acid sequence, 515 residues long: Protein disulfide-isomerase (515 aa).

The first 20 residues, 1–20 (MRSFAPWLVSLLGASAVVAA), serve as a signal peptide directing secretion. Thioredoxin domains follow at residues 21–132 (ADTE…QSLP) and 339–470 (VLDG…ENGK). Active-site nucleophile residues include Cys-54, Cys-57, Cys-389, and Cys-392. 2 disulfides stabilise this stretch: Cys-54/Cys-57 and Cys-389/Cys-392. The segment at 478–515 (VASEETQEGGDVTEAAPSATEAETPAATDDEKAEHDEL) is disordered. The span at 490 to 504 (TEAAPSATEAETPAA) shows a compositional bias: low complexity. Residues 506 to 515 (DDEKAEHDEL) show a composition bias toward basic and acidic residues. Residues 512–515 (HDEL) carry the Prevents secretion from ER motif.

The protein belongs to the protein disulfide isomerase family.

It localises to the endoplasmic reticulum lumen. It carries out the reaction Catalyzes the rearrangement of -S-S- bonds in proteins.. Functionally, participates in the folding of proteins containing disulfide bonds, may be involved in glycosylation, prolyl hydroxylation and triglyceride transfer. The protein is Protein disulfide-isomerase (pdiA) of Aspergillus niger.